Consider the following 425-residue polypeptide: Glutamyl-tRNA reductase (425 aa).

Substrate-binding positions include 49–52, S107, 112–114, and Q118; these read TCNR and EPQ. Residue C50 is the Nucleophile of the active site. 187–192 is an NADP(+) binding site; sequence GAGETI.

Belongs to the glutamyl-tRNA reductase family. In terms of assembly, homodimer.

It catalyses the reaction (S)-4-amino-5-oxopentanoate + tRNA(Glu) + NADP(+) = L-glutamyl-tRNA(Glu) + NADPH + H(+). It participates in porphyrin-containing compound metabolism; protoporphyrin-IX biosynthesis; 5-aminolevulinate from L-glutamyl-tRNA(Glu): step 1/2. In terms of biological role, catalyzes the NADPH-dependent reduction of glutamyl-tRNA(Glu) to glutamate 1-semialdehyde (GSA). This Pseudomonas entomophila (strain L48) protein is Glutamyl-tRNA reductase.